We begin with the raw amino-acid sequence, 184 residues long: Adenine phosphoribosyltransferase (184 aa).

It belongs to the purine/pyrimidine phosphoribosyltransferase family. Homodimer.

It localises to the cytoplasm. It carries out the reaction AMP + diphosphate = 5-phospho-alpha-D-ribose 1-diphosphate + adenine. Its pathway is purine metabolism; AMP biosynthesis via salvage pathway; AMP from adenine: step 1/1. Functionally, catalyzes a salvage reaction resulting in the formation of AMP, that is energically less costly than de novo synthesis. The polypeptide is Adenine phosphoribosyltransferase (Shewanella baltica (strain OS223)).